The sequence spans 264 residues: tRNA pseudouridine synthase A (264 aa).

D51 functions as the Nucleophile in the catalytic mechanism. Y109 is a binding site for substrate.

It belongs to the tRNA pseudouridine synthase TruA family. As to quaternary structure, homodimer.

It carries out the reaction uridine(38/39/40) in tRNA = pseudouridine(38/39/40) in tRNA. In terms of biological role, formation of pseudouridine at positions 38, 39 and 40 in the anticodon stem and loop of transfer RNAs. This Vibrio campbellii (strain ATCC BAA-1116) protein is tRNA pseudouridine synthase A.